The following is a 140-amino-acid chain: Nucleoside diphosphate kinase (140 aa).

Lysine 11, phenylalanine 59, arginine 87, threonine 93, arginine 104, and asparagine 114 together coordinate ATP. Histidine 117 (pros-phosphohistidine intermediate) is an active-site residue.

This sequence belongs to the NDK family. In terms of assembly, homotetramer. Mg(2+) is required as a cofactor.

It is found in the cytoplasm. It catalyses the reaction a 2'-deoxyribonucleoside 5'-diphosphate + ATP = a 2'-deoxyribonucleoside 5'-triphosphate + ADP. It carries out the reaction a ribonucleoside 5'-diphosphate + ATP = a ribonucleoside 5'-triphosphate + ADP. In terms of biological role, major role in the synthesis of nucleoside triphosphates other than ATP. The ATP gamma phosphate is transferred to the NDP beta phosphate via a ping-pong mechanism, using a phosphorylated active-site intermediate. The sequence is that of Nucleoside diphosphate kinase from Acidiphilium cryptum (strain JF-5).